Consider the following 212-residue polypeptide: ER lumen protein-retaining receptor 1 (212 aa).

The Lumenal segment spans residues 1-4 (MNLF). Residues 5 to 24 (RFLGDLSHLLAIILLLLKIW) traverse the membrane as a helical segment. At 25 to 32 (KSRSCAGI) the chain is on the cytoplasmic side. The helical transmembrane segment at 33-52 (SGKSQVLFAVVFTARYLDLF) threads the bilayer. The tract at residues 47–48 (RY) is interaction with the K-D-E-L motif on target proteins. The Lumenal segment spans residues 53 to 58 (TNYISL). A helical membrane pass occupies residues 59 to 79 (YNTCMKVVYIACSFTTVWMIY). Topologically, residues 80–92 (SKFKATYDGNHDT) are cytoplasmic. A helical membrane pass occupies residues 93–110 (FRVEFLVIPTAILAFLVN). Residues 111–116 (HDFTPL) lie on the Lumenal side of the membrane. The chain crosses the membrane as a helical span at residues 117 to 135 (EILWTFSIYLESVAILPQL). The Cytoplasmic segment spans residues 136–149 (FMVSKTGEAETITS). Residues 150-168 (HYLFALGVYRTLYLFNWIW) form a helical membrane-spanning segment. Residues 159–169 (RTLYLFNWIWR) form an interaction with the K-D-E-L motif on target proteins region. Residues 169–178 (RYHFEGFFDL) are Lumenal-facing. Residues 179–199 (IAIVAGLVQTVLYCDFFYLYI) form a helical membrane-spanning segment. Residues 200–212 (TKVLKGKKLSLPA) are Cytoplasmic-facing. The segment at 204-207 (KGKK) is important for recycling of cargo proteins with the sequence motif K-D-E-L from the Golgi to the endoplasmic reticulum. A Phosphoserine; by PKA modification is found at S209.

It belongs to the ERD2 family. Upon ligand binding the receptor oligomerizes and interacts with components of the transport machinery such as ARFGAP1 and ARF1. In terms of processing, phosphorylation by PKA at Ser-209 is required for endoplasmic reticulum retention function.

The protein localises to the golgi apparatus membrane. It localises to the cytoplasmic vesicle. The protein resides in the COPI-coated vesicle membrane. It is found in the endoplasmic reticulum membrane. Its subcellular location is the endoplasmic reticulum-Golgi intermediate compartment membrane. Its function is as follows. Receptor for the C-terminal sequence motif K-D-E-L that is present on endoplasmic reticulum resident proteins and that mediates their recycling from the Golgi back to the endoplasmic reticulum. This is ER lumen protein-retaining receptor 1 (KDELR1) from Bos taurus (Bovine).